The chain runs to 71 residues: General transcription and DNA repair factor IIH subunit TFB5 (71 aa).

The protein belongs to the TFB5 family. As to quaternary structure, component of the 7-subunit TFIIH core complex composed of XPB, XPD, TFB1/GTF2H1, GTF2H2/P44, TFB4/GTF2H3, TFB2/GTF2H4 and TFB5/GTF2H5, which is active in NER. The core complex associates with the 3-subunit CDK-activating kinase (CAK) module composed of CYCH1/cyclin H1, CDKD and MAT1/At4g30820 to form the 10-subunit holoenzyme (holo-TFIIH) active in transcription.

The protein localises to the nucleus. Functionally, component of the general transcription and DNA repair factor IIH (TFIIH) core complex, which is involved in general and transcription-coupled nucleotide excision repair (NER) of damaged DNA and, when complexed to CAK, in RNA transcription by RNA polymerase II. In NER, TFIIH acts by opening DNA around the lesion to allow the excision of the damaged oligonucleotide and its replacement by a new DNA fragment. In transcription, TFIIH has an essential role in transcription initiation. When the pre-initiation complex (PIC) has been established, TFIIH is required for promoter opening and promoter escape. Phosphorylation of the C-terminal tail (CTD) of the largest subunit of RNA polymerase II by the kinase module CAK controls the initiation of transcription. The chain is General transcription and DNA repair factor IIH subunit TFB5 from Arabidopsis thaliana (Mouse-ear cress).